We begin with the raw amino-acid sequence, 269 residues long: Shikimate dehydrogenase (NADP(+)) (269 aa).

Residues 22–24 (TLS) and T68 contribute to the shikimate site. K72 acts as the Proton acceptor in catalysis. 2 residues coordinate shikimate: N93 and D104. NADP(+) contacts are provided by residues 128–132 (GAGGA), 152–157 (NRTKSR), and F210. A shikimate-binding site is contributed by Y212. G233 contacts NADP(+).

This sequence belongs to the shikimate dehydrogenase family. As to quaternary structure, homodimer.

The catalysed reaction is shikimate + NADP(+) = 3-dehydroshikimate + NADPH + H(+). Its pathway is metabolic intermediate biosynthesis; chorismate biosynthesis; chorismate from D-erythrose 4-phosphate and phosphoenolpyruvate: step 4/7. Involved in the biosynthesis of the chorismate, which leads to the biosynthesis of aromatic amino acids. Catalyzes the reversible NADPH linked reduction of 3-dehydroshikimate (DHSA) to yield shikimate (SA). The protein is Shikimate dehydrogenase (NADP(+)) of Saccharolobus solfataricus (strain ATCC 35092 / DSM 1617 / JCM 11322 / P2) (Sulfolobus solfataricus).